The chain runs to 209 residues: Dual specificity phosphatase 29 (209 aa).

The 150-residue stretch at 44 to 193 folds into the Tyrosine-protein phosphatase domain; sequence NHVNEVWPNL…LRELDIQLAL (150 aa). 137-144 is a binding site for substrate; sequence NCAMGRSR. Catalysis depends on cysteine 138, which acts as the Phosphocysteine intermediate.

Belongs to the protein-tyrosine phosphatase family. Non-receptor class dual specificity subfamily.

It localises to the cytoplasm. The protein localises to the nucleus. It carries out the reaction O-phospho-L-tyrosyl-[protein] + H2O = L-tyrosyl-[protein] + phosphate. The catalysed reaction is O-phospho-L-seryl-[protein] + H2O = L-seryl-[protein] + phosphate. The enzyme catalyses O-phospho-L-threonyl-[protein] + H2O = L-threonyl-[protein] + phosphate. Its function is as follows. Dual specificity phosphatase able to dephosphorylate phosphotyrosine, phosphoserine and phosphothreonine residues within the same substrate, with a preference for phosphotyrosine as a substrate. Involved in the modulation of AMPK and MAPK1/2 signaling pathways. The polypeptide is Dual specificity phosphatase 29 (dusp29) (Xenopus tropicalis (Western clawed frog)).